The sequence spans 289 residues: Phosphatidylserine decarboxylase proenzyme (289 aa).

Residues Asp-92, His-149, and Ser-254 each act as charge relay system; for autoendoproteolytic cleavage activity in the active site. Ser-254 serves as the catalytic Schiff-base intermediate with substrate; via pyruvic acid; for decarboxylase activity. At Ser-254 the chain carries Pyruvic acid (Ser); by autocatalysis.

The protein belongs to the phosphatidylserine decarboxylase family. PSD-B subfamily. Prokaryotic type I sub-subfamily. Heterodimer of a large membrane-associated beta subunit and a small pyruvoyl-containing alpha subunit. It depends on pyruvate as a cofactor. In terms of processing, is synthesized initially as an inactive proenzyme. Formation of the active enzyme involves a self-maturation process in which the active site pyruvoyl group is generated from an internal serine residue via an autocatalytic post-translational modification. Two non-identical subunits are generated from the proenzyme in this reaction, and the pyruvate is formed at the N-terminus of the alpha chain, which is derived from the carboxyl end of the proenzyme. The autoendoproteolytic cleavage occurs by a canonical serine protease mechanism, in which the side chain hydroxyl group of the serine supplies its oxygen atom to form the C-terminus of the beta chain, while the remainder of the serine residue undergoes an oxidative deamination to produce ammonia and the pyruvoyl prosthetic group on the alpha chain. During this reaction, the Ser that is part of the protease active site of the proenzyme becomes the pyruvoyl prosthetic group, which constitutes an essential element of the active site of the mature decarboxylase.

The protein localises to the cell membrane. The enzyme catalyses a 1,2-diacyl-sn-glycero-3-phospho-L-serine + H(+) = a 1,2-diacyl-sn-glycero-3-phosphoethanolamine + CO2. It functions in the pathway phospholipid metabolism; phosphatidylethanolamine biosynthesis; phosphatidylethanolamine from CDP-diacylglycerol: step 2/2. Catalyzes the formation of phosphatidylethanolamine (PtdEtn) from phosphatidylserine (PtdSer). In Pseudomonas aeruginosa (strain LESB58), this protein is Phosphatidylserine decarboxylase proenzyme.